A 359-amino-acid chain; its full sequence is Peptide chain release factor 1 (359 aa).

At Gln236 the chain carries N5-methylglutamine. Residues 288-307 (QDEQDAERKSTIGTGDRSER) are disordered. Basic and acidic residues predominate over residues 293 to 307 (AERKSTIGTGDRSER).

The protein belongs to the prokaryotic/mitochondrial release factor family. Post-translationally, methylated by PrmC. Methylation increases the termination efficiency of RF1.

The protein localises to the cytoplasm. Peptide chain release factor 1 directs the termination of translation in response to the peptide chain termination codons UAG and UAA. In Streptococcus sanguinis (strain SK36), this protein is Peptide chain release factor 1.